Here is a 503-residue protein sequence, read N- to C-terminus: EZH inhibitory protein (503 aa).

Basic and acidic residues predominate over residues 1 to 16 (MATQSDMEKEQKHQQD). Disordered stretches follow at residues 1–72 (MATQ…AAAA), 97–462 (HSDR…RSIS), and 483–503 (VPPE…PPEP). The segment covering 41-72 (PAASVTTVSSQASPSGGAALSSSTAGSSAAAA) has biased composition (low complexity). The segment covering 97–107 (HSDRQDCRSPH) has biased composition (basic and acidic residues). Over residues 184-197 (YPCSGASTSSQATQ) the composition is skewed to polar residues. Serine 259 carries the post-translational modification Phosphoserine. Low complexity predominate over residues 345–366 (LRSRSTQQRSALLSRRSLSGSA). The sufficient for interaction with EZH2 stretch occupies residues 401–409 (WHAVRMRAS). The tract at residues 403–423 (AVRMRASSPSPPGRFFLPIPQ) is necessary and sufficient for inhibition of PRC2/EED-EZH1 and PRC2/EED-EZH2 complex activity. Residues 428 to 453 (SSSSSYASNSSSPSRSPGLSPSSPSP) are compositionally biased toward low complexity.

As to quaternary structure, interacts with PRC2/EED-EZH1 complex member EZH1 and with PRC2/EED-EZH2 complex member EZH2; the interaction blocks EZH1/EZH2 methyltransferase activity. Interacts (via C-terminus) with SUZ12 which is a member of the PRC2/EED-EZH1 and PRC2/EED-EZH2 complexes. In testis, detected in male germ cells inside the seminiferous tubules, especially in spermatogonia and round spermatids (at protein level). In the ovary, expressed in primordial follicles and oocytes but not the external follicle cells (at protein level).

The protein resides in the nucleus. Its subcellular location is the cytoplasm. Functionally, inhibits PRC2/EED-EZH1 and PRC2/EED-EZH2 complex function by inhibiting EZH1/EZH2 methyltransferase activity, thereby causing down-regulation of histone H3 trimethylation on 'Lys-27' (H3K27me3). Probably inhibits methyltransferase activity by limiting the stimulatory effect of cofactors such as AEBP2 and JARID2. Inhibits H3K27me3 deposition during spermatogenesis and oogenesis. The protein is EZH inhibitory protein of Homo sapiens (Human).